The sequence spans 65 residues: Protein C' (65 aa).

This sequence belongs to the rhabdoviruses C protein family.

Its function is as follows. Seems to stimulates transcription by the viral polymerase. May play a role in viral pathogenesis or transmission by insects vectors. This chain is Protein C' (P), found in Vesicular stomatitis New Jersey virus (strain Missouri subtype Hazelhurst) (VSNJV).